The following is a 245-amino-acid chain: Large ribosomal subunit protein uL2 (245 aa).

Residues 196 to 226 (SPYAHPHGGGSHQKGGTPVSKTAPPGQKVGF) form a disordered region.

It belongs to the universal ribosomal protein uL2 family. In terms of assembly, part of the 50S ribosomal subunit. Forms a bridge to the 30S subunit in the 70S ribosome.

Functionally, one of the primary rRNA binding proteins. Required for association of the 30S and 50S subunits to form the 70S ribosome, for tRNA binding and peptide bond formation. It has been suggested to have peptidyltransferase activity; this is somewhat controversial. Makes several contacts with the 16S rRNA in the 70S ribosome. In Pyrobaculum neutrophilum (strain DSM 2338 / JCM 9278 / NBRC 100436 / V24Sta) (Thermoproteus neutrophilus), this protein is Large ribosomal subunit protein uL2.